A 287-amino-acid polypeptide reads, in one-letter code: Transmembrane protein 163 (287 aa).

The disordered stretch occupies residues 1 to 63; the sequence is METAAGSERR…ESGQFSDGLE (63 aa). The Cytoplasmic portion of the chain corresponds to 1–86; the sequence is METAAGSERR…HEAQNYRKKA (86 aa). Residues Ser-11, Ser-53, Ser-55, and Ser-59 each carry the phosphoserine modification. Residues 40–70 are required for interaction with MCOLN1; sequence EPPQPEEERQLRISESGQFSDGLEDRGLLES. A helical transmembrane segment spans residues 87 to 107; that stretch reads LWVSWFSIIVTLALAVAAFTV. At 108–114 the chain is on the extracellular side; sequence SVMRYSA. The helical transmembrane segment at 115–135 threads the bilayer; it reads SAFGFAFDAILDVLSSAIVLW. The Cytoplasmic portion of the chain corresponds to 136 to 148; that stretch reads RYSNAAAVHSAHR. Residues 149 to 169 form a helical membrane-spanning segment; that stretch reads EYIACVILGVIFLLSSVCIVV. Over 170–185 the chain is Extracellular; that stretch reads KAIHDLSTKLLPEVDD. Residues 186-206 traverse the membrane as a helical segment; it reads FLFSVSILSGILCSILAVLKF. The Cytoplasmic portion of the chain corresponds to 207-215; that stretch reads MLGKVLTSR. Residues 216–236 traverse the membrane as a helical segment; that stretch reads ALITDGFNSLVGGVMGFSILL. Residues 237-253 are Extracellular-facing; the sequence is SAEVFKHNSAVWYLDGS. A helical membrane pass occupies residues 254–274; that stretch reads IGVLIGLTIFAYGVKLLIDMV. Over 275-287 the chain is Cytoplasmic; the sequence is PRVRQTRHYEMFE.

The protein belongs to the TMEM163 family. Homodimer. Interacts with MCOLN1/TRPML1. Interacts with SLC30A1, SLC30A2, SLC30A3 and SLC30A4.

The protein resides in the cytoplasmic vesicle. It is found in the secretory vesicle. The protein localises to the synaptic vesicle membrane. Its subcellular location is the early endosome membrane. It localises to the late endosome membrane. The protein resides in the lysosome membrane. It is found in the cell membrane. The catalysed reaction is Zn(2+)(in) = Zn(2+)(out). In terms of biological role, zinc ion transporter that mediates zinc efflux and plays a crucial role in intracellular zinc homeostasis. Binds the divalent cations Zn(2+), Ni(2+), and to a minor extent Cu(2+). Is a functional modulator of P2X purinoceptors, including P2RX1, P2RX3, P2RX4 and P2RX7. Plays a role in central nervous system development and is required for myelination, and survival and proliferation of oligodendrocytes. This is Transmembrane protein 163 (TMEM163) from Bos taurus (Bovine).